The primary structure comprises 386 residues: Lysophosphatidylserine lipase ABHD12 (386 aa).

The Cytoplasmic segment spans residues 1-66; sequence MRKRAEPVPP…YGLWSRLRMF (66 aa). A helical membrane pass occupies residues 67 to 87; that stretch reads LIFLLGLYIAIPFLVKICPAI. Over 88 to 386 the chain is Extracellular; sequence QTQLVFLNLV…RDFLGNTEQQ (299 aa). N-linked (GlcNAc...) asparagine glycosylation occurs at asparagine 114. Serine 237 acts as the Nucleophile in catalysis. Catalysis depends on charge relay system residues aspartate 324 and histidine 363.

This sequence belongs to the serine esterase family.

Its subcellular location is the endoplasmic reticulum membrane. The catalysed reaction is 1-(9Z-octadecenoyl)-sn-glycero-3-phospho-L-serine + H2O = sn-glycero-3-phospho-L-serine + (9Z)-octadecenoate + H(+). The enzyme catalyses 1-(9Z-octadecenoyl)-sn-glycero-3-phospho-(1'-sn-glycerol) + H2O = sn-glycero-3-phospho-(1'-sn-glycerol) + (9Z)-octadecenoate + H(+). It carries out the reaction 1-(9Z-octadecenoyl)-sn-glycero-3-phospho-(1D-myo-inositol) + H2O = sn-glycero-3-phospho-1D-myo-inositol + (9Z)-octadecenoate + H(+). It catalyses the reaction 1-(9Z-octadecenoyl)-sn-glycero-3-phosphoethanolamine + H2O = sn-glycero-3-phosphoethanolamine + (9Z)-octadecenoate + H(+). The catalysed reaction is 1-(9Z-octadecenoyl)-sn-glycero-3-phosphocholine + H2O = 1-(9Z-octadecenoyl)-sn-glycerol + phosphocholine + H(+). The enzyme catalyses 2-(9Z-octadecenoyl)-glycerol + H2O = glycerol + (9Z)-octadecenoate + H(+). It carries out the reaction 1-hexadecanoyl-sn-glycero-3-phospho-L-serine + H2O = sn-glycero-3-phospho-L-serine + hexadecanoate + H(+). It catalyses the reaction 2-(5Z,8Z,11Z,14Z-eicosatetraenoyl)-glycerol + H2O = glycerol + (5Z,8Z,11Z,14Z)-eicosatetraenoate + H(+). The catalysed reaction is Hydrolyzes glycerol monoesters of long-chain fatty acids.. The enzyme catalyses 1-decanoylglycerol + H2O = decanoate + glycerol + H(+). It carries out the reaction 1-dodecanoylglycerol + H2O = dodecanoate + glycerol + H(+). It catalyses the reaction 1-tetradecanoylglycerol + H2O = tetradecanoate + glycerol + H(+). The catalysed reaction is 2-hexadecanoylglycerol + H2O = glycerol + hexadecanoate + H(+). The enzyme catalyses 1-(9Z-octadecenoyl)-glycerol + H2O = glycerol + (9Z)-octadecenoate + H(+). It carries out the reaction 2-(9Z,12Z-octadecadienoyl)-glycerol + H2O = (9Z,12Z)-octadecadienoate + glycerol + H(+). It catalyses the reaction 1-(5Z,8Z,11Z,14Z-eicosatetraenoyl)-glycerol + H2O = glycerol + (5Z,8Z,11Z,14Z)-eicosatetraenoate + H(+). The catalysed reaction is 1-(9Z,12Z-octadecadienoyl)-glycerol + H2O = (9Z,12Z)-octadecadienoate + glycerol + H(+). The enzyme catalyses 1-hexadecanoylglycerol + H2O = glycerol + hexadecanoate + H(+). It carries out the reaction 1-octadecanoylglycerol + H2O = octadecanoate + glycerol + H(+). It catalyses the reaction 1-octadecanoyl-2-(9,10-epoxyoctadecanoyl)-sn-glycero-3-phospho-L-serine + H2O = 9,10-epoxyoctadecanoate + 1-octadecanoyl-sn-glycero-3-phosphoserine + H(+). The catalysed reaction is 1-octadecanoyl-2-(10-hydroxyoctadecanoyl)-sn-glycero-3-phospho-L-serine + H2O = 1-octadecanoyl-sn-glycero-3-phosphoserine + 10-hydroxyoctadecanoate + H(+). The enzyme catalyses 1-hexadecanoyl-2-(10-hydroxyoctadecanoyl)-sn-glycero-3-phospho-L-serine + H2O = 10-hydroxyoctadecanoate + 1-hexadecanoyl-sn-glycero-3-phospho-L-serine + H(+). Lysophosphatidylserine (LPS) lipase that mediates the hydrolysis of lysophosphatidylserine, a class of signaling lipids that regulates immunological and neurological processes. Represents a major lysophosphatidylserine lipase in the brain, thereby playing a key role in the central nervous system. Also able to hydrolyze oxidized phosphatidylserine; oxidized phosphatidylserine is produced in response to severe inflammatory stress and constitutes a proapoptotic 'eat me' signal. Also has monoacylglycerol (MAG) lipase activity: hydrolyzes 2-arachidonoylglycerol (2-AG), thereby acting as a regulator of endocannabinoid signaling pathways. Has a strong preference for very-long-chain lipid substrates; substrate specificity is likely due to improved catalysis and not improved substrate binding. This is Lysophosphatidylserine lipase ABHD12 from Xenopus tropicalis (Western clawed frog).